A 265-amino-acid polypeptide reads, in one-letter code: Undecaprenyl-diphosphatase (265 aa).

Helical transmembrane passes span 41-61, 75-95, 104-124, 137-157, 180-200, 215-235, and 244-264; these read IAYT…LIYF, LKFL…LYVI, YNPS…GIYI, LSTK…LPGV, YSYL…LLFT, GIAL…GFLL, and YLID…GLII.

It belongs to the UppP family.

It is found in the cell membrane. The catalysed reaction is di-trans,octa-cis-undecaprenyl diphosphate + H2O = di-trans,octa-cis-undecaprenyl phosphate + phosphate + H(+). In terms of biological role, catalyzes the dephosphorylation of undecaprenyl diphosphate (UPP). The polypeptide is Undecaprenyl-diphosphatase (Saccharolobus islandicus (strain Y.N.15.51 / Yellowstone #2) (Sulfolobus islandicus)).